The primary structure comprises 242 residues: Biosynthetic peptidoglycan transglycosylase (242 aa).

The helical transmembrane segment at 19–39 (ILAALAVFWGGGIALFSVVPV) threads the bilayer.

Belongs to the glycosyltransferase 51 family.

Its subcellular location is the cell inner membrane. The catalysed reaction is [GlcNAc-(1-&gt;4)-Mur2Ac(oyl-L-Ala-gamma-D-Glu-L-Lys-D-Ala-D-Ala)](n)-di-trans,octa-cis-undecaprenyl diphosphate + beta-D-GlcNAc-(1-&gt;4)-Mur2Ac(oyl-L-Ala-gamma-D-Glu-L-Lys-D-Ala-D-Ala)-di-trans,octa-cis-undecaprenyl diphosphate = [GlcNAc-(1-&gt;4)-Mur2Ac(oyl-L-Ala-gamma-D-Glu-L-Lys-D-Ala-D-Ala)](n+1)-di-trans,octa-cis-undecaprenyl diphosphate + di-trans,octa-cis-undecaprenyl diphosphate + H(+). Its pathway is cell wall biogenesis; peptidoglycan biosynthesis. In terms of biological role, peptidoglycan polymerase that catalyzes glycan chain elongation from lipid-linked precursors. This chain is Biosynthetic peptidoglycan transglycosylase, found in Salmonella heidelberg (strain SL476).